Here is a 190-residue protein sequence, read N- to C-terminus: Guanylate kinase (190 aa).

In terms of domain architecture, Guanylate kinase-like spans 8–186 (ARPTVLTGPS…ALAELEKQMN (179 aa)). 15 to 22 (GPSGVGKG) lines the ATP pocket.

The protein belongs to the guanylate kinase family.

It localises to the cytoplasm. The catalysed reaction is GMP + ATP = GDP + ADP. The enzyme catalyses dZMP + ATP = dZDP + ADP. It functions in the pathway purine metabolism. Essential for recycling GMP and indirectly, cGMP. In terms of biological role, (Microbial infection) Catalyzes the phosphorylation of dZMP to dZDP, when the bacterium is infected by a phage that produces the substrate for the synthesis of dZTP (2- amino-2'-deoxyadenosine 5'-triphosphate), which is then used by the phage as a DNA polymerase substrate. This is Guanylate kinase from Synechococcus sp. (strain CC9311).